A 227-amino-acid polypeptide reads, in one-letter code: Bone marrow proteoglycan (227 aa).

Residues 1 to 16 form the signal peptide; that stretch reads MKFPLLLALLVGGAFA. Residues 17–110 constitute a propeptide, acidic; it reads LHLSSEASDS…TSLMGDSGFK (94 aa). The disordered stretch occupies residues 21–105; sequence SEASDSKSPL…KEEDTTSLMG (85 aa). An O-linked (GalNAc...) serine glycan is attached at Ser24. A compositionally biased stretch (basic and acidic residues) spans 34-46; the sequence is SLPREAEISRPEV. Over residues 58-70 the composition is skewed to acidic residues; sequence LEEEEEEEEEEGS. Ser70 carries an O-linked (Xyl...) (chondroitin sulfate) serine glycan. In terms of domain architecture, C-type lectin spans 128 to 227; that stretch reads LVCRSCYRGT…GKRRPFICAY (100 aa). 2 disulfide bridges follow: Cys130–Cys225 and Cys202–Cys217.

In terms of processing, nitrated.

It localises to the secreted. Cytotoxin and helminthotoxin. MBP also induces non-cytolytic histamine release from basophils. It is involved in antiparasitic defense mechanisms and immune hypersensitivity reactions. The protein is Bone marrow proteoglycan (Prg2) of Rattus norvegicus (Rat).